The following is a 1431-amino-acid chain: Protein CFT1 (1431 aa).

The segment at 721–759 (EPSKSESSEPISHQIDSENKPNITNGINGTTARSARQTQ) is disordered. Positions 740 to 759 (KPNITNGINGTTARSARQTQ) are enriched in polar residues.

Belongs to the CFT1 family.

Its subcellular location is the nucleus. Functionally, RNA-binding component of the cleavage and polyadenylation factor (CPF) complex, which plays a key role in polyadenylation-dependent pre-mRNA 3'-end formation and cooperates with cleavage factors including the CFIA complex and NAB4/CFIB. Involved in poly(A) site recognition. May be involved in coupling transcription termination and mRNA 3'-end formation. The polypeptide is Protein CFT1 (CFT1) (Cryptococcus neoformans var. neoformans serotype D (strain B-3501A) (Filobasidiella neoformans)).